The following is an 88-amino-acid chain: Small ribosomal subunit protein bS20 (88 aa).

The interval 1-25 (MANSPQAKKRARQNERRAEVNKARR) is disordered. The span at 12-22 (RQNERRAEVNK) shows a compositional bias: basic and acidic residues.

Belongs to the bacterial ribosomal protein bS20 family.

Functionally, binds directly to 16S ribosomal RNA. This Dinoroseobacter shibae (strain DSM 16493 / NCIMB 14021 / DFL 12) protein is Small ribosomal subunit protein bS20.